A 1183-amino-acid polypeptide reads, in one-letter code: PAN2-PAN3 deadenylation complex catalytic subunit PAN2 (1183 aa).

Residues 1 to 24 (MDGWTEISRIAATTQPPKGPSPHI) are disordered. WD repeat units lie at residues 159–207 (DLNK…SIKS), 269–309 (PFPA…NVFL), and 327–366 (SKAP…STIT). The linker stretch occupies residues 369 to 520 (FVNFPASIEQ…FQYKVPLSRK (152 aa)). One can recognise a USP domain in the interval 521 to 919 (KIPNCYSRLQ…KPVILVYHDS (399 aa)). One can recognise an Exonuclease domain in the interval 977-1151 (IAIDAEFVNL…EDAYTALLLY (175 aa)). Residues Asp980, Glu982, Asp1090, and Asp1143 each coordinate a divalent metal cation.

This sequence belongs to the peptidase C19 family. PAN2 subfamily. In terms of assembly, forms a heterotrimer with an asymmetric homodimer of the regulatory subunit PAN3 to form the poly(A)-nuclease (PAN) deadenylation complex. The cofactor is a divalent metal cation.

Its subcellular location is the cytoplasm. The enzyme catalyses Exonucleolytic cleavage of poly(A) to 5'-AMP.. With respect to regulation, positively regulated by the regulatory subunit PAN3. Catalytic subunit of the poly(A)-nuclease (PAN) deadenylation complex, one of two cytoplasmic mRNA deadenylases involved in mRNA turnover. PAN specifically shortens poly(A) tails of RNA and the activity is stimulated by poly(A)-binding protein PAB1. PAN deadenylation is followed by rapid degradation of the shortened mRNA tails by the CCR4-NOT complex. Deadenylated mRNAs are then degraded by two alternative mechanisms, namely exosome-mediated 3'-5' exonucleolytic degradation, or deadenylation-dependent mRNA decaping and subsequent 5'-3' exonucleolytic degradation by XRN1. May also be involved in post-transcriptional maturation of mRNA poly(A) tails. This is PAN2-PAN3 deadenylation complex catalytic subunit PAN2 from Scheffersomyces stipitis (strain ATCC 58785 / CBS 6054 / NBRC 10063 / NRRL Y-11545) (Yeast).